The following is a 177-amino-acid chain: Large ribosomal subunit protein uL6 (177 aa).

It belongs to the universal ribosomal protein uL6 family. In terms of assembly, part of the 50S ribosomal subunit.

This protein binds to the 23S rRNA, and is important in its secondary structure. It is located near the subunit interface in the base of the L7/L12 stalk, and near the tRNA binding site of the peptidyltransferase center. This is Large ribosomal subunit protein uL6 from Yersinia enterocolitica serotype O:8 / biotype 1B (strain NCTC 13174 / 8081).